We begin with the raw amino-acid sequence, 859 residues long: Mismatch repair endonuclease PMS2 (859 aa).

Residues asparagine 45, aspartate 70, glutamate 109, alanine 110, and leucine 111 each coordinate ATP. Disordered stretches follow at residues 391–413 (ELEKPVPGKQDNSPSLKSTADEK), 427–455 (LHPTKEIKSRGPETAELTRSFPSEKRGVL), and 469–555 (RGSQ…KPED). Composition is skewed to basic and acidic residues over residues 427 to 439 (LHPTKEIKSRGPE) and 485 to 495 (CMDREKIEKDS). Positions 512-525 (EVASSFSSDYNVSS) are enriched in polar residues. The Nuclear localization signal motif lies at 574-577 (KRFK). Positions 578–597 (TEERPSNVNISQRLPGPQST) are disordered. Positions 583-597 (SNVNISQRLPGPQST) are enriched in polar residues.

It belongs to the DNA mismatch repair MutL/HexB family. Heterodimer of PMS2 and MLH1 (MutL alpha); this interaction is required for the stability of both partners. Forms a ternary complex with MutS alpha (MSH2-MSH6) or MutS beta (MSH2-MSH3). Part of the BRCA1-associated genome surveillance complex (BASC), which contains BRCA1, MSH2, MSH6, MLH1, ATM, BLM, PMS2 and the RAD50-MRE11-NBS1 protein complex. This association could be a dynamic process changing throughout the cell cycle and within subnuclear domains. Interacts with MTMR15/FAN1.

Its subcellular location is the nucleus. It carries out the reaction ATP + H2O = ADP + phosphate + H(+). In terms of biological role, component of the post-replicative DNA mismatch repair system (MMR). Heterodimerizes with MLH1 to form MutL alpha. DNA repair is initiated by MutS alpha (MSH2-MSH6) or MutS beta (MSH2-MSH3) binding to a dsDNA mismatch, then MutL alpha is recruited to the heteroduplex. Assembly of the MutL-MutS-heteroduplex ternary complex in presence of RFC and PCNA is sufficient to activate endonuclease activity of PMS2. It introduces single-strand breaks near the mismatch and thus generates new entry points for the exonuclease EXO1 to degrade the strand containing the mismatch. DNA methylation would prevent cleavage and therefore assure that only the newly mutated DNA strand is going to be corrected. MutL alpha (MLH1-PMS2) interacts physically with the clamp loader subunits of DNA polymerase III, suggesting that it may play a role to recruit the DNA polymerase III to the site of the MMR. Also implicated in DNA damage signaling, a process which induces cell cycle arrest and can lead to apoptosis in case of major DNA damages. Possesses an ATPase activity, but in the absence of gross structural changes, ATP hydrolysis may not be necessary for proficient mismatch repair. This Mus musculus (Mouse) protein is Mismatch repair endonuclease PMS2.